Here is a 427-residue protein sequence, read N- to C-terminus: A-kinase anchor protein 5 (427 aa).

Residues 1–122 (METTISEIHV…DADLSKKKAK (122 aa)) are disordered. Residues 1–170 (METTISEIHV…LDIQTQTPLN (170 aa)) form an essential to the intracellular anchoring function region. Over residues 8–19 (IHVENKDEKRSA) the composition is skewed to basic and acidic residues. S22 bears the Phosphoserine mark. Residue C36 is the site of S-palmitoyl cysteine attachment. Residues 37-48 (FKRRKKAAKALK) are compositionally biased toward basic residues. The short motif at 76-96 (RGAWASLKRLVTRRKRSESSK) is the AKAP CaM-binding element. The span at 92 to 102 (SESSKQQKPLE) shows a compositional bias: basic and acidic residues. C129 is lipidated: S-palmitoyl cysteine. 2 stretches are compositionally biased toward polar residues: residues 171-182 (DQATKAKSTQDL) and 242-252 (VQPQQASPLET). Disordered regions lie at residues 171–205 (DQAT…STTS), 239–269 (KQDV…PPLP), and 281–333 (SNST…EESK). A compositionally biased stretch (basic and acidic residues) spans 302-333 (EETKPKDTELSQESDFKENGITEEKSKSEESK). The segment at 392-405 (LIETASSLVKNAIQ) is PKA-RII subunit binding domain. The tract at residues 410 to 427 (QLVNEMASDDNKINNLLQ) is tethers NFATC2 to CRAC channels.

In terms of assembly, binding protein for dimer of the RII-beta regulatory subunit of cAMP-dependent protein kinase (PKA) and also for the protein kinase C (PKC) and the phosphatase calcineurin (PP2B). Each enzyme is inhibited when bound to the anchoring protein. Also binds the beta2-adrenergic receptor. Part of a complex containing AKAP5, ADCY5, ADCY6 and PDE4C. Interacts with ADCY8, and enhances its phosphorylation at lipid rafts. Interacts with ORAI1 (isoform alpha) (via N-terminus) upon store depletion and in response to LTC4. Does not interact with ORAI2 and ORAI3 paralogs. Interacts (via leucine zipper domain) with NFATC2/NFAT1. Interacts with calmodulin; the interaction is calcium-independent. Interacts with KCNQ2; the interaction may help KCNQ2 channel complex to retain calcium-bound calmodulin. Interacts with KCNK2; the channel is recruited to postsynaptic microdomains by AKAP5 where it can integrate neurotransmitter receptor signals. Part of a complex composed of AKAP5 and ADRB2. Palmitoylated. Palmitoylation at Cys-36 and Cys-129 play a key role in the targeting of AKAP5 to lipid rafts. Palmitoylation by ZDHHC2 is required for AKAP5 function in LTP-stimulated recycling endosome exocytosis. Predominantly in the cerebral cortex and the postsynaptic densities of the forebrain, and to a lesser extent in adrenal medulla, lung and anterior pituitary.

It is found in the postsynaptic recycling endosome membrane. The protein localises to the cell projection. Its subcellular location is the dendrite. The protein resides in the postsynaptic cell membrane. Its function is as follows. Multivalent scaffold protein that anchors the cAMP-dependent protein kinase/PKA to cytoskeletal and/or organelle-associated proteins, targeting the signal carried by cAMP to specific intracellular effectors. Association with the beta2-adrenergic receptor (beta2-AR) not only regulates beta2-AR signaling pathway, but also the activation by PKA by switching off the beta2-AR signaling cascade. Plays a role in long term synaptic potentiation by regulating protein trafficking from the dendritic recycling endosomes to the plasma membrane and controlling both structural and functional plasticity at excitatory synapses. In hippocampal pyramidal neurons, recruits KCNK2/TREK-1 channel at postsynaptic dense bodies microdomains and converts it to a leak channel no longer sensitive to stimulation by arachidonic acid, acidic pH or mechanical stress, nor inhibited by Gq-coupled receptors but still under the negative control of Gs-coupled receptors. Associates with ORAI1 pore-forming subunit of CRAC channels in Ca(2+) signaling microdomains where it recruits NFATC2/NFAT1 and couples store-operated Ca(2+) influx to calmodulin and calcineurin signaling and activation of NFAT-dependent transcriptional responses. The chain is A-kinase anchor protein 5 (AKAP5) from Homo sapiens (Human).